The following is a 513-amino-acid chain: ATP synthase subunit alpha (513 aa).

Residue 169-176 (GDRQTGKT) participates in ATP binding.

Belongs to the ATPase alpha/beta chains family. As to quaternary structure, F-type ATPases have 2 components, CF(1) - the catalytic core - and CF(0) - the membrane proton channel. CF(1) has five subunits: alpha(3), beta(3), gamma(1), delta(1), epsilon(1). CF(0) has three main subunits: a(1), b(2) and c(9-12). The alpha and beta chains form an alternating ring which encloses part of the gamma chain. CF(1) is attached to CF(0) by a central stalk formed by the gamma and epsilon chains, while a peripheral stalk is formed by the delta and b chains.

The protein resides in the cell inner membrane. It carries out the reaction ATP + H2O + 4 H(+)(in) = ADP + phosphate + 5 H(+)(out). Its function is as follows. Produces ATP from ADP in the presence of a proton gradient across the membrane. The alpha chain is a regulatory subunit. In Edwardsiella ictaluri (strain 93-146), this protein is ATP synthase subunit alpha.